An 88-amino-acid polypeptide reads, in one-letter code: Sec-independent protein translocase protein TatA (88 aa).

The helical transmembrane segment at 1-21 threads the bilayer; the sequence is MGGISITQLLIIASIVVVLFG. The disordered stretch occupies residues 39–88; the sequence is FKKSMSEDDNTTSTSSDKSSQDADFTAPPIEPKANLACPDEAKNKDKEHV. Residues 49–62 are compositionally biased toward low complexity; sequence TTSTSSDKSSQDAD. The span at 78–88 shows a compositional bias: basic and acidic residues; it reads DEAKNKDKEHV.

Belongs to the TatA/E family. In terms of assembly, the Tat system comprises two distinct complexes: a TatABC complex, containing multiple copies of TatA, TatB and TatC subunits, and a separate TatA complex, containing only TatA subunits. Substrates initially bind to the TatABC complex, which probably triggers association of the separate TatA complex to form the active translocon.

It is found in the cell inner membrane. Its function is as follows. Part of the twin-arginine translocation (Tat) system that transports large folded proteins containing a characteristic twin-arginine motif in their signal peptide across membranes. TatA could form the protein-conducting channel of the Tat system. The chain is Sec-independent protein translocase protein TatA from Sodalis glossinidius (strain morsitans).